The sequence spans 341 residues: Anthranilate phosphoribosyltransferase (341 aa).

5-phospho-alpha-D-ribose 1-diphosphate-binding positions include Gly79, 82–83, Thr87, 89–92, 107–115, and Ser119; these read GD, NIST, and KHGNRAASS. Gly79 is a binding site for anthranilate. A Mg(2+)-binding site is contributed by Ser91. Residue Asn110 coordinates anthranilate. Arg165 contributes to the anthranilate binding site. Residues Asp224 and Glu225 each contribute to the Mg(2+) site.

The protein belongs to the anthranilate phosphoribosyltransferase family. In terms of assembly, homodimer. It depends on Mg(2+) as a cofactor.

The enzyme catalyses N-(5-phospho-beta-D-ribosyl)anthranilate + diphosphate = 5-phospho-alpha-D-ribose 1-diphosphate + anthranilate. It functions in the pathway amino-acid biosynthesis; L-tryptophan biosynthesis; L-tryptophan from chorismate: step 2/5. In terms of biological role, catalyzes the transfer of the phosphoribosyl group of 5-phosphorylribose-1-pyrophosphate (PRPP) to anthranilate to yield N-(5'-phosphoribosyl)-anthranilate (PRA). The sequence is that of Anthranilate phosphoribosyltransferase from Dehalococcoides mccartyi (strain ATCC BAA-2266 / KCTC 15142 / 195) (Dehalococcoides ethenogenes (strain 195)).